A 270-amino-acid chain; its full sequence is Phthiotriol/phenolphthiotriol dimycocerosates methyltransferase (270 aa).

Belongs to the methyltransferase superfamily. Phthiotriol/phenolphthiotriol dimycocerosates methyltransferase family.

Functionally, catalyzes the methylation of the lipid moiety of the intermediate compounds phthiotriol and glycosylated phenolphthiotriol dimycoserosates to form phthiocerol dimycocerosates (DIM A) and glycosylated phenolphthiocerol dimycocerosates (PGL). This chain is Phthiotriol/phenolphthiotriol dimycocerosates methyltransferase, found in Mycobacterium bovis (strain ATCC BAA-935 / AF2122/97).